The primary structure comprises 489 residues: Potassium voltage-gated channel subfamily A member 7 (489 aa).

The chain crosses the membrane as a helical span at residues 176–196 (VLAVVSVLVILVSIVVFCLET). An N-linked (GlcNAc...) asparagine glycan is attached at Asn-224. A helical transmembrane segment spans residues 242–262 (FFVVETLCICWFSFELLVRLV). The S-palmitoyl cysteine moiety is linked to residue Cys-264. Residues 274–294 (VMNLIDFVAILPYFVALGTEL) form a helical membrane-spanning segment. A helical; Voltage-sensor transmembrane segment spans residues 309–328 (ILRVIRLVRVFRIFKLSRHS). Residues 345-365 (LGLLIFFLFIGVVLFSSAVYF) traverse the membrane as a helical segment. The Selectivity filter signature appears at 391 to 396 (TVGYGD). A helical transmembrane segment spans residues 406–426 (IVGSLCAIAGVLTISLPVPVI).

It belongs to the potassium channel family. A (Shaker) (TC 1.A.1.2) subfamily. Kv1.7/KCNA7 sub-subfamily. Heterotetramer of potassium channel proteins. In terms of tissue distribution, detected in heart, skeletal muscle, brain, and pancreatic islet cells.

It is found in the membrane. The catalysed reaction is K(+)(in) = K(+)(out). Its function is as follows. Mediates the voltage-dependent potassium ion permeability of excitable membranes. Assuming opened or closed conformations in response to the voltage difference across the membrane, the protein forms a potassium-selective channel through which potassium ions may pass in accordance with their electrochemical gradient. Channels formed by isoform 1 inactivate faster than channels formed by isoform 2. The polypeptide is Potassium voltage-gated channel subfamily A member 7 (Kcna7) (Mus musculus (Mouse)).